A 501-amino-acid chain; its full sequence is Lysine--tRNA ligase (501 aa).

Glutamate 402 and glutamate 409 together coordinate Mg(2+).

Belongs to the class-II aminoacyl-tRNA synthetase family. As to quaternary structure, homodimer. The cofactor is Mg(2+).

Its subcellular location is the cytoplasm. The enzyme catalyses tRNA(Lys) + L-lysine + ATP = L-lysyl-tRNA(Lys) + AMP + diphosphate. This is Lysine--tRNA ligase from Helicobacter pylori (strain Shi470).